The primary structure comprises 317 residues: Regulator of microtubule dynamics protein 1 (317 aa).

K168 is subject to N6-succinyllysine. TPR repeat units follow at residues 171 to 207 (AICIGDVGDYEGIKAKIANAYIIKEHFEKAIELNPKD) and 225 to 261 (PWYQRRIAKVLFATPPGSTYEEALGYFHRAEQVDPNF).

Belongs to the RMDN family. Interacts with microtubules.

Its subcellular location is the cytoplasm. It is found in the cytoskeleton. The protein localises to the spindle. The protein resides in the spindle pole. In Bos taurus (Bovine), this protein is Regulator of microtubule dynamics protein 1 (RMDN1).